The chain runs to 100 residues: Urease subunit gamma (100 aa).

It belongs to the urease gamma subunit family. In terms of assembly, heterotrimer of UreA (gamma), UreB (beta) and UreC (alpha) subunits. Three heterotrimers associate to form the active enzyme.

The protein resides in the cytoplasm. The catalysed reaction is urea + 2 H2O + H(+) = hydrogencarbonate + 2 NH4(+). It participates in nitrogen metabolism; urea degradation; CO(2) and NH(3) from urea (urease route): step 1/1. In Prochlorococcus marinus (strain MIT 9301), this protein is Urease subunit gamma.